Reading from the N-terminus, the 316-residue chain is 4-hydroxy-3-methylbut-2-enyl diphosphate reductase (316 aa).

Residue C12 coordinates [4Fe-4S] cluster. 2 residues coordinate (2E)-4-hydroxy-3-methylbut-2-enyl diphosphate: H43 and H81. Dimethylallyl diphosphate-binding residues include H43 and H81. Isopentenyl diphosphate contacts are provided by H43 and H81. Position 103 (C103) interacts with [4Fe-4S] cluster. H131 serves as a coordination point for (2E)-4-hydroxy-3-methylbut-2-enyl diphosphate. Position 131 (H131) interacts with dimethylallyl diphosphate. Residue H131 participates in isopentenyl diphosphate binding. E133 acts as the Proton donor in catalysis. (2E)-4-hydroxy-3-methylbut-2-enyl diphosphate is bound at residue T170. C198 serves as a coordination point for [4Fe-4S] cluster. The (2E)-4-hydroxy-3-methylbut-2-enyl diphosphate site is built by S226, N228, and S271. Positions 226, 228, and 271 each coordinate dimethylallyl diphosphate. Isopentenyl diphosphate-binding residues include S226, N228, and S271.

This sequence belongs to the IspH family. [4Fe-4S] cluster is required as a cofactor.

It catalyses the reaction isopentenyl diphosphate + 2 oxidized [2Fe-2S]-[ferredoxin] + H2O = (2E)-4-hydroxy-3-methylbut-2-enyl diphosphate + 2 reduced [2Fe-2S]-[ferredoxin] + 2 H(+). The enzyme catalyses dimethylallyl diphosphate + 2 oxidized [2Fe-2S]-[ferredoxin] + H2O = (2E)-4-hydroxy-3-methylbut-2-enyl diphosphate + 2 reduced [2Fe-2S]-[ferredoxin] + 2 H(+). The protein operates within isoprenoid biosynthesis; dimethylallyl diphosphate biosynthesis; dimethylallyl diphosphate from (2E)-4-hydroxy-3-methylbutenyl diphosphate: step 1/1. Its pathway is isoprenoid biosynthesis; isopentenyl diphosphate biosynthesis via DXP pathway; isopentenyl diphosphate from 1-deoxy-D-xylulose 5-phosphate: step 6/6. Catalyzes the conversion of 1-hydroxy-2-methyl-2-(E)-butenyl 4-diphosphate (HMBPP) into a mixture of isopentenyl diphosphate (IPP) and dimethylallyl diphosphate (DMAPP). Acts in the terminal step of the DOXP/MEP pathway for isoprenoid precursor biosynthesis. The chain is 4-hydroxy-3-methylbut-2-enyl diphosphate reductase from Bacillus mycoides (strain KBAB4) (Bacillus weihenstephanensis).